Reading from the N-terminus, the 130-residue chain is uncharacterized protein (130 aa).

Residues 8–28 (PFILMIIVLGLFLVSIGGYYY) form a helical membrane-spanning segment.

Its subcellular location is the membrane. This is an uncharacterized protein from Bacillus anthracis.